Consider the following 447-residue polypeptide: Rab GDP dissociation inhibitor alpha (447 aa).

A Phosphoserine modification is found at S427.

It belongs to the Rab GDI family. Interacts with RHOH. Interacts with the non-phosphorylated forms of RAB1A, RAB3A, RAB5A, RAB5B, RAB5C, RAB8A, RAB8B, RAB10, RAB12, RAB35, and RAB43.

It is found in the cytoplasm. The protein resides in the golgi apparatus. The protein localises to the trans-Golgi network. Its function is as follows. Regulates the GDP/GTP exchange reaction of most Rab proteins by inhibiting the dissociation of GDP from them, and the subsequent binding of GTP to them. Promotes the dissociation of GDP-bound Rab proteins from the membrane and inhibits their activation. Promotes the dissociation of RAB1A, RAB3A, RAB5A and RAB10 from membranes. The protein is Rab GDP dissociation inhibitor alpha (GDI1) of Canis lupus familiaris (Dog).